A 329-amino-acid chain; its full sequence is tRNA N6-adenosine threonylcarbamoyltransferase (329 aa).

Fe cation-binding residues include H107 and H111. Substrate-binding positions include 129-133 (LVSGG), D162, G175, and N268. D296 is a binding site for Fe cation.

Belongs to the KAE1 / TsaD family. Fe(2+) is required as a cofactor.

The protein localises to the cytoplasm. The enzyme catalyses L-threonylcarbamoyladenylate + adenosine(37) in tRNA = N(6)-L-threonylcarbamoyladenosine(37) in tRNA + AMP + H(+). Required for the formation of a threonylcarbamoyl group on adenosine at position 37 (t(6)A37) in tRNAs that read codons beginning with adenine. Is involved in the transfer of the threonylcarbamoyl moiety of threonylcarbamoyl-AMP (TC-AMP) to the N6 group of A37, together with TsaE and TsaB. TsaD likely plays a direct catalytic role in this reaction. This chain is tRNA N6-adenosine threonylcarbamoyltransferase, found in Nitratiruptor sp. (strain SB155-2).